The primary structure comprises 487 residues: Cytochrome P450 716A75 (487 aa).

A helical membrane pass occupies residues 5 to 25; sequence FVSLLSLFLLILLPLSLLFLF. Cys434 serves as a coordination point for heme.

The protein belongs to the cytochrome P450 family. The cofactor is heme.

It localises to the membrane. The catalysed reaction is beta-amyrin + reduced [NADPH--hemoprotein reductase] + O2 = erythrodiol + oxidized [NADPH--hemoprotein reductase] + H2O + H(+). It catalyses the reaction erythrodiol + reduced [NADPH--hemoprotein reductase] + O2 = oleanolic aldehyde + oxidized [NADPH--hemoprotein reductase] + 2 H2O + H(+). It carries out the reaction oleanolic aldehyde + reduced [NADPH--hemoprotein reductase] + O2 = oleanolate + oxidized [NADPH--hemoprotein reductase] + H2O + 2 H(+). In terms of biological role, catalyzes the C-28 oxidation of beta-amyrin to form erythrodiol. Catalyzes the C-28 oxidation of erythrodiol to form oleanolic aldehyde. Catalyzes the C-28 oxidation of oleanolic aldehyde to form oleanolate. The polypeptide is Cytochrome P450 716A75 (Maesa lanceolata (False assegai)).